Consider the following 276-residue polypeptide: Small ribosomal subunit protein uS2 (276 aa).

A disordered region spans residues 251-276; the sequence is AEEAPAAAEEAPAAEPAAEETPAAEA. Low complexity predominate over residues 252–276; that stretch reads EEAPAAAEEAPAAEPAAEETPAAEA.

It belongs to the universal ribosomal protein uS2 family.

This is Small ribosomal subunit protein uS2 from Jannaschia sp. (strain CCS1).